We begin with the raw amino-acid sequence, 480 residues long: G-rich sequence factor 1 (480 aa).

Residues Met1–Tyr117 constitute a mitochondrion transit peptide. RRM domains lie at Lys122 to Val246 and Gly250 to Arg326. The residue at position 244 (Ser244) is a Phosphoserine. Ser335 is modified (phosphoserine). Residues His401–Lys480 enclose the RRM 3 domain.

In terms of assembly, monomer. Found in a complex with DDX28, DHX30, FASTKD2 and FASTKD5. Interacts with the mitochondrial RNase P complex subunit TRMT10C/MRPP1. Interacts with the 2 components of the mitochondrial degradosome complex, PNPT1 and SUPV3L1, in an RNA-dependent manner.

Its subcellular location is the mitochondrion matrix. It localises to the cytoplasm. Regulator of post-transcriptional mitochondrial gene expression, required for assembly of the mitochondrial ribosome and for recruitment of mRNA and lncRNA. Binds RNAs containing the 14 base G-rich element. Preferentially binds RNAs transcribed from three contiguous genes on the light strand of mtDNA, the ND6 mRNA, and the long non-coding RNAs for MT-CYB and MT-ND5, each of which contains multiple consensus binding sequences. Involved in the degradosome-mediated decay of non-coding mitochondrial transcripts (MT-ncRNA) and tRNA-like molecules. Acts by unwinding G-quadruplex RNA structures in MT-ncRNA, thus facilitating their degradation by the degradosome. G-quadruplexes (G4) are non-canonical 4 stranded structures formed by transcripts from the light strand of mtDNA. This chain is G-rich sequence factor 1 (GRSF1), found in Homo sapiens (Human).